The primary structure comprises 179 residues: Cellular nucleic acid-binding protein homolog (179 aa).

7 consecutive CCHC-type zinc fingers follow at residues 17–34 (PRCYNCGENGHQARECTK), 36–53 (SICYNCNQTGHKASECTE), 58–75 (KTCYACGTAGHLVRDCPS), 83–100 (AECYKCGRVGHIARDCRT), 116–133 (MNCYACGSYGHQARDCTM), 135–152 (VKCYSCGKIGHRSFECQQ), and 157–174 (QLCYKCNQPGHIAVNCTS).

It to human CNBP and to retroviral nucleic acid binding proteins (NBP). In terms of processing, phosphorylated.

It is found in the nucleus. Acts in the sexual differentiation pathway. Is required for efficient conjugation. Double-stranded DNA-binding protein. The protein is Cellular nucleic acid-binding protein homolog (byr3) of Schizosaccharomyces pombe (strain 972 / ATCC 24843) (Fission yeast).